The chain runs to 282 residues: NADPH-dependent 7-cyano-7-deazaguanine reductase (282 aa).

88–90 (IES) contacts substrate. 90–91 (SK) contributes to the NADPH binding site. C190 acts as the Thioimide intermediate in catalysis. Residue D197 is the Proton donor of the active site. 229–230 (HE) contributes to the substrate binding site. 258 to 259 (RG) lines the NADPH pocket.

Belongs to the GTP cyclohydrolase I family. QueF type 2 subfamily. In terms of assembly, homodimer.

The protein resides in the cytoplasm. The enzyme catalyses 7-aminomethyl-7-carbaguanine + 2 NADP(+) = 7-cyano-7-deazaguanine + 2 NADPH + 3 H(+). Its pathway is tRNA modification; tRNA-queuosine biosynthesis. Functionally, catalyzes the NADPH-dependent reduction of 7-cyano-7-deazaguanine (preQ0) to 7-aminomethyl-7-deazaguanine (preQ1). The chain is NADPH-dependent 7-cyano-7-deazaguanine reductase from Escherichia coli O17:K52:H18 (strain UMN026 / ExPEC).